The primary structure comprises 522 residues: Response regulator mcs4 (522 aa).

Residues aspartate 148–threonine 274 are disordered. The span at asparagine 174–lysine 194 shows a compositional bias: polar residues. The segment covering arginine 244–lysine 255 has biased composition (basic and acidic residues). Positions threonine 260 to threonine 274 are enriched in polar residues. Residues asparagine 363 to glycine 505 form the Response regulatory domain. Residue aspartate 412 is modified to 4-aspartylphosphate.

It localises to the cytoplasm. Response regulator that coordinately controls the stress activated wak1-wis1-sty1 MAP kinase pathway and fission yeast cell cycle. This chain is Response regulator mcs4 (mcs4), found in Schizosaccharomyces pombe (strain 972 / ATCC 24843) (Fission yeast).